Reading from the N-terminus, the 80-residue chain is Cell division activator CedA (80 aa).

It belongs to the CedA family.

Activates the cell division inhibited by chromosomal DNA over-replication. This is Cell division activator CedA from Salmonella arizonae (strain ATCC BAA-731 / CDC346-86 / RSK2980).